A 104-amino-acid chain; its full sequence is MAISKALFASLLLSLLLLEQVQSIQTDQVTSNAISEAAYSYKKIDCGGACAARCRLSSRPRLCNRACGTCCARCNCVPPGTSGNTETCPCYASLTTHGNKRKCP.

The first 23 residues, 1–23, serve as a signal peptide directing secretion; sequence MAISKALFASLLLSLLLLEQVQS. A propeptide spans 24 to 38 (removed in mature form); the sequence is IQTDQVTSNAISEAA.

It belongs to the GASA family. In terms of processing, six disulfide bonds may be present. As to expression, expressed in tubers, stems, flowers, shoot apex and leaves, but not in roots or stolons.

The protein resides in the secreted. It is found in the cell wall. In terms of biological role, has an antimicrobial activity. Causes a rapid aggregation of both Gram-positive and Gram-negative bacteria, but the antimicrobial activity is not correlated with the capacity to aggregate bacteria. This chain is Snakin-2 (SN2), found in Solanum tuberosum (Potato).